A 145-amino-acid polypeptide reads, in one-letter code: Hemoglobin subunit beta (145 aa).

In terms of domain architecture, Globin spans 1 to 145 (MLTAEEKAAV…VANALAHRYH (145 aa)). Threonine 11 carries the post-translational modification Phosphothreonine. Residue serine 43 is modified to Phosphoserine. Position 58 is an N6-acetyllysine (lysine 58). Histidine 62 contributes to the heme b binding site. Lysine 81 bears the N6-acetyllysine mark. Histidine 91 contacts heme b. Residue cysteine 92 is modified to S-nitrosocysteine.

The protein belongs to the globin family. In terms of assembly, heterotetramer of two alpha chains and two beta chains. Red blood cells.

Functionally, involved in oxygen transport from the lung to the various peripheral tissues. In terms of biological role, functions as an endogenous inhibitor of enkephalin-degrading enzymes such as DPP3, and may thereby play a role as a regulator of pain and inflammation. This chain is Hemoglobin subunit beta (HBB), found in Bos taurus (Bovine).